Consider the following 581-residue polypeptide: Prolactin receptor (581 aa).

Positions 1–24 are cleaved as a signal peptide; the sequence is MKENAASRVLFILLLFLFASLLNG. Residues 25-237 lie on the Extracellular side of the membrane; the sequence is QSPPEKPKLI…NDFPVKDTSM (213 aa). Fibronectin type-III domains follow at residues 27–127 and 129–229; these read PPEK…IVEP and PPVN…IPND. The cysteines at positions 36 and 46 are disulfide-linked. N-linked (GlcNAc...) asparagine glycosylation is present at asparagine 59. A disulfide bridge links cysteine 75 with cysteine 86. A glycan (N-linked (GlcNAc...) asparagine) is linked at asparagine 132. Positions 211 and 212 each coordinate Zn(2+). A WSXWS motif motif is present at residues 215–219; sequence WSEWS. The chain crosses the membrane as a helical span at residues 238 to 258; the sequence is WIFVGVLSAVICLIMVWAVAL. The Cytoplasmic segment spans residues 259-581; that stretch reads KGYSMVTCIL…SAKKAPPALP (323 aa). A Box 1 motif motif is present at residues 267–275; it reads ILPPVPGPK. Basic and acidic residues-rich tracts occupy residues 323 to 349 and 375 to 388; these read QHLM…DTDS and HIPE…DPET. 2 disordered regions span residues 323-388 and 462-492; these read QHLM…DPET and FKPS…PDQD.

Belongs to the type I cytokine receptor family. Type 1 subfamily. In terms of assembly, interacts with SMARCA1. Interacts with NEK3 and VAV2 and this interaction is prolactin-dependent. In terms of tissue distribution, expressed in all tissues examined; liver, pituitary, adrenal gland, ovary and fetal liver.

It is found in the membrane. In terms of biological role, this is a receptor for the anterior pituitary hormone prolactin. In Ovis aries (Sheep), this protein is Prolactin receptor (PRLR).